Here is a 478-residue protein sequence, read N- to C-terminus: Growth/differentiation factor 10 (478 aa).

Positions 1-33 (MAHVPARTSPGPGPQLLLLLLPLFLLLLRDVAG) are cleaved as a signal peptide. Positions 34–368 (SHRAPAWSAL…EKTMQKARRK (335 aa)) are excised as a propeptide. 3 N-linked (GlcNAc...) asparagine glycosylation sites follow: Asn-118, Asn-156, and Asn-281. Residues 266-319 (YDPFPAGDPEPRAAPNNSADPRVRRAAQATGPLQDNELPGLDERPPRAHAQHFH) are disordered. Disulfide bonds link Cys-376/Cys-443, Cys-405/Cys-475, and Cys-409/Cys-477. An N-linked (GlcNAc...) asparagine glycan is attached at Asn-469.

Belongs to the TGF-beta family. Homodimer or heterodimer. Can form a non-covalent complex of the mature region and the pro-region. In terms of tissue distribution, expressed in femur, brain, lung, skeletal muscle, pancreas and testis.

It is found in the secreted. Growth factor involved in osteogenesis and adipogenesis. Plays an inhibitory role in the process of osteoblast differentiation via SMAD2/3 pathway. Plays an inhibitory role in the process of adipogenesis. The polypeptide is Growth/differentiation factor 10 (Homo sapiens (Human)).